Consider the following 167-residue polypeptide: MIYIDNRQNKIKAQEDLDKLINEIIDYALKKEEVDIGYEISVIYVDNEIIKEINNDTRGINKETDVLSFPMLEYPKGRVFSESYREYSFGVEYLNEGNLVLGDIVLSLEKALEQSKEYNHSFLREVCYLVVHSVLHLLGYDHIDEEEKVIMRKKEEEILESFNISRG.

Zn(2+) contacts are provided by histidine 132, histidine 136, and histidine 142.

The protein belongs to the endoribonuclease YbeY family. Zn(2+) is required as a cofactor.

The protein localises to the cytoplasm. Single strand-specific metallo-endoribonuclease involved in late-stage 70S ribosome quality control and in maturation of the 3' terminus of the 16S rRNA. The chain is Endoribonuclease YbeY from Clostridium tetani (strain Massachusetts / E88).